The sequence spans 347 residues: Cell shape-determining protein MreB (347 aa).

Residues 19-21 (TAN), 168-170 (GGT), 216-219 (ERIK), and 296-299 (GGAL) each bind ATP.

Belongs to the FtsA/MreB family. Forms polymers.

It is found in the cytoplasm. Functionally, forms membrane-associated dynamic filaments that are essential for cell shape determination. Acts by regulating cell wall synthesis and cell elongation, and thus cell shape. A feedback loop between cell geometry and MreB localization may maintain elongated cell shape by targeting cell wall growth to regions of negative cell wall curvature. The chain is Cell shape-determining protein MreB from Escherichia coli O6:H1 (strain CFT073 / ATCC 700928 / UPEC).